The chain runs to 65 residues: Large ribosomal subunit protein bL35 (65 aa).

The disordered stretch occupies residues 1–26; that stretch reads MPKMKTHRGAAKRFRKTGTGKLKRGK.

Belongs to the bacterial ribosomal protein bL35 family.

In Clostridium beijerinckii (strain ATCC 51743 / NCIMB 8052) (Clostridium acetobutylicum), this protein is Large ribosomal subunit protein bL35.